Consider the following 426-residue polypeptide: Serine hydroxymethyltransferase (426 aa).

(6S)-5,6,7,8-tetrahydrofolate is bound by residues L118 and 122-124; that span reads GHL. K227 is modified (N6-(pyridoxal phosphate)lysine).

The protein belongs to the SHMT family. Homodimer. Pyridoxal 5'-phosphate serves as cofactor.

The protein localises to the cytoplasm. It catalyses the reaction (6R)-5,10-methylene-5,6,7,8-tetrahydrofolate + glycine + H2O = (6S)-5,6,7,8-tetrahydrofolate + L-serine. It functions in the pathway one-carbon metabolism; tetrahydrofolate interconversion. Its pathway is amino-acid biosynthesis; glycine biosynthesis; glycine from L-serine: step 1/1. Functionally, catalyzes the reversible interconversion of serine and glycine with tetrahydrofolate (THF) serving as the one-carbon carrier. This reaction serves as the major source of one-carbon groups required for the biosynthesis of purines, thymidylate, methionine, and other important biomolecules. Also exhibits THF-independent aldolase activity toward beta-hydroxyamino acids, producing glycine and aldehydes, via a retro-aldol mechanism. The chain is Serine hydroxymethyltransferase from Mycolicibacterium paratuberculosis (strain ATCC BAA-968 / K-10) (Mycobacterium paratuberculosis).